Consider the following 300-residue polypeptide: 33 kDa chaperonin (300 aa).

Cystine bridges form between Cys-240–Cys-242 and Cys-273–Cys-276.

This sequence belongs to the HSP33 family. In terms of processing, under oxidizing conditions two disulfide bonds are formed involving the reactive cysteines. Under reducing conditions zinc is bound to the reactive cysteines and the protein is inactive.

It localises to the cytoplasm. Functionally, redox regulated molecular chaperone. Protects both thermally unfolding and oxidatively damaged proteins from irreversible aggregation. Plays an important role in the bacterial defense system toward oxidative stress. The polypeptide is 33 kDa chaperonin (Cyanothece sp. (strain PCC 7425 / ATCC 29141)).